A 292-amino-acid chain; its full sequence is tRNA-cytidine(32) 2-sulfurtransferase (292 aa).

Positions 62–67 match the PP-loop motif motif; sequence SGGKDS. Residues Cys-137, Cys-140, and Cys-228 each coordinate [4Fe-4S] cluster.

It belongs to the TtcA family. As to quaternary structure, homodimer. The cofactor is Mg(2+). [4Fe-4S] cluster serves as cofactor.

The protein resides in the cytoplasm. It carries out the reaction cytidine(32) in tRNA + S-sulfanyl-L-cysteinyl-[cysteine desulfurase] + AH2 + ATP = 2-thiocytidine(32) in tRNA + L-cysteinyl-[cysteine desulfurase] + A + AMP + diphosphate + H(+). It functions in the pathway tRNA modification. Functionally, catalyzes the ATP-dependent 2-thiolation of cytidine in position 32 of tRNA, to form 2-thiocytidine (s(2)C32). The sulfur atoms are provided by the cysteine/cysteine desulfurase (IscS) system. This is tRNA-cytidine(32) 2-sulfurtransferase from Brucella anthropi (strain ATCC 49188 / DSM 6882 / CCUG 24695 / JCM 21032 / LMG 3331 / NBRC 15819 / NCTC 12168 / Alc 37) (Ochrobactrum anthropi).